The chain runs to 1252 residues: MNVGKTNWTEEQKEAIDTRNCNLLVAAAAGSGKTAVLVERIVKIITNEENPVDIDRLLVVTFTNAAASEMRERIGDAIVNKLCENPNSRVIQKQLALIGKSKITTIHSFCLDVIKNNFHMLDLDPDFRVGDETEIILLKNETLEELFEDKYLQAEYTSKGINKNNNSIEFLKLVESYCGNKNDQVLFNMVMNLYNFSMSNPEPYKWLKKAAERFNVDDDFEFGDSLWAEVLMKNIQIQLLGMKGQLIESINIINSCASIESYRENLEVELSMLEKLIVASNNYEKLYEELKNVQFKTLKRCPKDADKEKQKLVRDLRDGVKKSLSKISEDILSQNSEEIKEEFKVLYPLMKTLSELVIEFDIRYKDKKKKRGIIDFNDFEHMCLSILTKSDESGNIVPSETALKIREKYEEILIDEYQDSNMVQEVILSTISRKDTENPNLFMVGDVKQSIYRFRQANPGIFLEKYNSYKENKDEKNRKVLLYKNFRSRKEVLDSVNFVFKQIMSVNIGELDYDDNEKLNLGANYEEIEENLISHSAELNIIEKSEDNTEIKENNEDEESVDNIMLEARLIGRRIIELKENFKVLDKNTNVYRKAEFKDIVILLRSTKGWANVFSDELKNMGIPVFADANSGYFDAPEVKTMLSLLQVIDNPRQDIPMAAVLKSPVGGFSVEDLIDIKVIEGDTFYDKLKVAADIGDDEFSVRIRTFLNRLYRWRKESLYTPIDEFIWYLYTDTGYYGYVGAVSGGIQRQANLKMLFQRAKIYSETSYKGLFNFINFINKLKLTSGDMGSAKILGENENVVRIMSIHKSKGLEFPIVFVGGLGKNFNLMDMNNPVLFHNYLGFGPEYVDYKKRISHKTLAKEAIKNRIRIETLSEEMRILYVAFTRAKEKLIMVGSVSDIKRSVFKWAVNLRSNQNKISEDYVLKSKSFLDWIASAVIRHKDAENLRDIMDTSKENIDNLVCDPSSWRVNVLSRNDVLSFNQLLLEEEKNINEKLTQFYKRLKEIRSSNYESVYIEEIKSRLEFKYRYEKAAELPSLLSVTELKRNINEDNDEYATKIFTPSLVKKPLFLEEVKKMSPSERGTAVHSVMQHLDFSSISCDMSIKNIRHQIDDMVFRRILTEKQAESVNINRILKFFQSPIGSRVIKAEKVYREFPFQIRVKSTEIYNDLPKIYDDENIIVQGIVDLFFKENDEIVLLDYKNDYINDENLNETVKKYTYQINYYKRALEIVTGLKVKEKYLYLFYTGDTIKIE.

Positions 6–489 constitute a UvrD-like helicase ATP-binding domain; that stretch reads TNWTEEQKEA…VLLYKNFRSR (484 aa). 27–34 is an ATP binding site; it reads AAAGSGKT. Residues 523–811 enclose the UvrD-like helicase C-terminal domain; the sequence is ANYEEIEENL…RIMSIHKSKG (289 aa).

The protein belongs to the helicase family. AddA subfamily. Heterodimer of AddA and AddB/RexB. Requires Mg(2+) as cofactor.

It catalyses the reaction Couples ATP hydrolysis with the unwinding of duplex DNA by translocating in the 3'-5' direction.. The catalysed reaction is ATP + H2O = ADP + phosphate + H(+). The heterodimer acts as both an ATP-dependent DNA helicase and an ATP-dependent, dual-direction single-stranded exonuclease. Recognizes the chi site generating a DNA molecule suitable for the initiation of homologous recombination. The AddA nuclease domain is required for chi fragment generation; this subunit has the helicase and 3' -&gt; 5' nuclease activities. The sequence is that of ATP-dependent helicase/nuclease subunit A from Clostridium acetobutylicum (strain ATCC 824 / DSM 792 / JCM 1419 / IAM 19013 / LMG 5710 / NBRC 13948 / NRRL B-527 / VKM B-1787 / 2291 / W).